Reading from the N-terminus, the 99-residue chain is Large ribosomal subunit protein bL27 (99 aa).

A propeptide spanning residues 1–9 is cleaved from the precursor; the sequence is MLIMNLQLF.

The protein belongs to the bacterial ribosomal protein bL27 family. Post-translationally, the N-terminus is cleaved by ribosomal processing cysteine protease Prp.

The polypeptide is Large ribosomal subunit protein bL27 (Clostridium beijerinckii (strain ATCC 51743 / NCIMB 8052) (Clostridium acetobutylicum)).